Reading from the N-terminus, the 274-residue chain is Cytochrome b-c1 complex subunit Rieske, mitochondrial (274 aa).

The Mitochondrial matrix segment spans residues 79–103; the sequence is SHTDIKVPDFSDYRRSEVLDTTKSS. The helical transmembrane segment at 104–140 threads the bilayer; the sequence is RESSDARKGFSYLVTATTAVGVTYAAKSIVTQFVSSM. The Mitochondrial intermembrane portion of the chain corresponds to 141-274; the sequence is SASADVLAMS…FTSDDLVIVG (134 aa). Residues 187–272 form the Rieske domain; that stretch reads EAAVELSQLR…YEFTSDDLVI (86 aa). Positions 217, 219, 236, 239, and 241 each coordinate [2Fe-2S] cluster. A disulfide bond links Cys222 and Cys238.

Belongs to the Rieske iron-sulfur protein family. As to quaternary structure, component of the ubiquinol-cytochrome c oxidoreductase (cytochrome b-c1 complex, complex III, CIII), a multisubunit enzyme composed of 11 subunits. The complex is composed of 3 respiratory subunits cytochrome b, cytochrome c1 and Rieske protein UQCRFS1, 2 core protein subunits UQCRC1/QCR1 and UQCRC2/QCR2, and 6 low-molecular weight protein subunits UQCRH/QCR6, UQCRB/QCR7, UQCRQ/QCR8, UQCR10/QCR9, UQCR11/QCR10 and subunit 9, the cleavage product of Rieske protein UQCRFS1. The complex exists as an obligatory dimer and forms supercomplexes (SCs) in the inner mitochondrial membrane with NADH-ubiquinone oxidoreductase (complex I, CI) and cytochrome c oxidase (complex IV, CIV), resulting in different assemblies (supercomplex SCI(1)III(2)IV(1) and megacomplex MCI(2)III(2)IV(2)). Incorporation of the Rieske protein UQCRFS1 is the penultimate step in complex III assembly. Interacts with TTC19, which is involved in the clearance of UQCRFS1 fragments. In terms of assembly, component of the ubiquinol-cytochrome c oxidoreductase (cytochrome b-c1 complex, complex III, CIII). Subunit 9 corresponds to the mitochondrial targeting sequence (MTS) of Rieske protein UQCRFS1. It is retained after processing and incorporated inside complex III, where it remains bound to the complex and localizes between the 2 core subunits UQCRC1/QCR1 and UQCRC2/QCR2. The cofactor is [2Fe-2S] cluster. Post-translationally, proteolytic processing is necessary for the correct insertion of UQCRFS1 in the complex III dimer. Several fragments are generated during UQCRFS1 insertion, most probably due to the endogenous matrix-processing peptidase (MPP) activity of the 2 core protein subunits UQCRC1/QCR1 and UQCRC2/QCR2, which are homologous to the 2 mitochondrial-processing peptidase (MPP) subunits beta-MPP and alpha-MPP respectively. The action of the protease is also necessary for the clearance of the UQCRFS1 fragments.

Its subcellular location is the mitochondrion inner membrane. The enzyme catalyses a quinol + 2 Fe(III)-[cytochrome c](out) = a quinone + 2 Fe(II)-[cytochrome c](out) + 2 H(+)(out). In terms of biological role, component of the ubiquinol-cytochrome c oxidoreductase, a multisubunit transmembrane complex that is part of the mitochondrial electron transport chain which drives oxidative phosphorylation. The respiratory chain contains 3 multisubunit complexes succinate dehydrogenase (complex II, CII), ubiquinol-cytochrome c oxidoreductase (cytochrome b-c1 complex, complex III, CIII) and cytochrome c oxidase (complex IV, CIV), that cooperate to transfer electrons derived from NADH and succinate to molecular oxygen, creating an electrochemical gradient over the inner membrane that drives transmembrane transport and the ATP synthase. The cytochrome b-c1 complex catalyzes electron transfer from ubiquinol to cytochrome c, linking this redox reaction to translocation of protons across the mitochondrial inner membrane, with protons being carried across the membrane as hydrogens on the quinol. In the process called Q cycle, 2 protons are consumed from the matrix, 4 protons are released into the intermembrane space and 2 electrons are passed to cytochrome c. The Rieske protein is a catalytic core subunit containing a [2Fe-2S] iron-sulfur cluster. It cycles between 2 conformational states during catalysis to transfer electrons from the quinol bound in the Q(0) site in cytochrome b to cytochrome c1. Incorporation of UQCRFS1 is the penultimate step in complex III assembly. Functionally, component of the ubiquinol-cytochrome c oxidoreductase (cytochrome b-c1 complex, complex III, CIII). UQCRFS1 undergoes proteolytic processing once it is incorporated in the complex III dimer. One of the fragments, called subunit 9, corresponds to its mitochondrial targeting sequence (MTS). The proteolytic processing is necessary for the correct insertion of UQCRFS1 in the complex III dimer, but the persistence of UQCRFS1-derived fragments may prevent newly imported UQCRFS1 to be processed and assembled into complex III and is detrimental for the complex III structure and function. The sequence is that of Cytochrome b-c1 complex subunit Rieske, mitochondrial (UQCRFS1) from Aotus azarae (Azara's night monkey).